The primary structure comprises 615 residues: ATP-dependent zinc metalloprotease FtsH 2 (615 aa).

Residues 1 to 7 (MNEPNRN) are Cytoplasmic-facing. The chain crosses the membrane as a helical span at residues 8–28 (FFWIFFLILGIFWLQSVWFGS). Residues 29–99 (RTVQQIPYSQ…VTYRREIENT (71 aa)) lie on the Periplasmic side of the membrane. Residues 100–120 (FFRDLLSWVVPALIFVAVFLY) traverse the membrane as a helical segment. The Cytoplasmic portion of the chain corresponds to 121 to 615 (FSRKFAEKGG…APQRERDLSV (495 aa)). ATP is bound at residue 195–202 (GPPGTGKT). H418 contributes to the Zn(2+) binding site. E419 is an active-site residue. Zn(2+) is bound by residues H422 and D495.

This sequence in the central section; belongs to the AAA ATPase family. The protein in the C-terminal section; belongs to the peptidase M41 family. In terms of assembly, homohexamer. Zn(2+) serves as cofactor.

The protein resides in the cell inner membrane. In terms of biological role, acts as a processive, ATP-dependent zinc metallopeptidase for both cytoplasmic and membrane proteins. Plays a role in the quality control of integral membrane proteins. The polypeptide is ATP-dependent zinc metalloprotease FtsH 2 (Bdellovibrio bacteriovorus (strain ATCC 15356 / DSM 50701 / NCIMB 9529 / HD100)).